The sequence spans 468 residues: 6-phospho-beta-galactosidase (468 aa).

D-galactose 6-phosphate contacts are provided by Gln19, His116, Asn159, Glu160, and Asn297. Catalysis depends on Glu160, which acts as the Proton donor. The Nucleophile role is filled by Glu375. Residues Ser428, Trp429, Lys435, and Tyr437 each contribute to the D-galactose 6-phosphate site.

The protein belongs to the glycosyl hydrolase 1 family.

The enzyme catalyses a 6-phospho-beta-D-galactoside + H2O = D-galactose 6-phosphate + an alcohol. It participates in carbohydrate metabolism; lactose degradation; D-galactose 6-phosphate and beta-D-glucose from lactose 6-phosphate: step 1/1. This is 6-phospho-beta-galactosidase from Lactococcus lactis subsp. lactis (Streptococcus lactis).